A 764-amino-acid polypeptide reads, in one-letter code: Phosphoribosylformylglycinamidine synthase subunit PurL (764 aa).

The active site involves H57. ATP is bound by residues Y60 and K104. E106 serves as a coordination point for Mg(2+). Substrate is bound by residues 107–110 and R129; that span reads SHNH. The active-site Proton acceptor is H108. D130 contacts Mg(2+). Q258 is a binding site for substrate. D286 contacts Mg(2+). 330–332 is a substrate binding site; that stretch reads ESQ. The ATP site is built by N518 and G555. A Mg(2+)-binding site is contributed by N556. Substrate is bound at residue S558.

Belongs to the FGAMS family. Monomer. Part of the FGAM synthase complex composed of 1 PurL, 1 PurQ and 2 PurS subunits.

It is found in the cytoplasm. The catalysed reaction is N(2)-formyl-N(1)-(5-phospho-beta-D-ribosyl)glycinamide + L-glutamine + ATP + H2O = 2-formamido-N(1)-(5-O-phospho-beta-D-ribosyl)acetamidine + L-glutamate + ADP + phosphate + H(+). It functions in the pathway purine metabolism; IMP biosynthesis via de novo pathway; 5-amino-1-(5-phospho-D-ribosyl)imidazole from N(2)-formyl-N(1)-(5-phospho-D-ribosyl)glycinamide: step 1/2. In terms of biological role, part of the phosphoribosylformylglycinamidine synthase complex involved in the purines biosynthetic pathway. Catalyzes the ATP-dependent conversion of formylglycinamide ribonucleotide (FGAR) and glutamine to yield formylglycinamidine ribonucleotide (FGAM) and glutamate. The FGAM synthase complex is composed of three subunits. PurQ produces an ammonia molecule by converting glutamine to glutamate. PurL transfers the ammonia molecule to FGAR to form FGAM in an ATP-dependent manner. PurS interacts with PurQ and PurL and is thought to assist in the transfer of the ammonia molecule from PurQ to PurL. This is Phosphoribosylformylglycinamidine synthase subunit PurL from Nocardia farcinica (strain IFM 10152).